Consider the following 702-residue polypeptide: DNA ligase (702 aa).

Residues 32–36 and 81–82 each bind NAD(+); these read DAEYD and SL. Residues 104–125 form a disordered region; the sequence is AESSAQKASLNPLVRDSDQKNR. Glutamate 139 provides a ligand contact to NAD(+). Lysine 141 serves as the catalytic N6-AMP-lysine intermediate. Residues arginine 162, glutamate 199, lysine 316, and lysine 340 each contribute to the NAD(+) site. Zn(2+) is bound by residues cysteine 434, cysteine 437, cysteine 452, and cysteine 458. Residues 616–702 enclose the BRCT domain; that stretch reads KPNHPFRDKT…KALKPEGTKV (87 aa).

Belongs to the NAD-dependent DNA ligase family. LigA subfamily. Requires Mg(2+) as cofactor. It depends on Mn(2+) as a cofactor.

It carries out the reaction NAD(+) + (deoxyribonucleotide)n-3'-hydroxyl + 5'-phospho-(deoxyribonucleotide)m = (deoxyribonucleotide)n+m + AMP + beta-nicotinamide D-nucleotide.. In terms of biological role, DNA ligase that catalyzes the formation of phosphodiester linkages between 5'-phosphoryl and 3'-hydroxyl groups in double-stranded DNA using NAD as a coenzyme and as the energy source for the reaction. It is essential for DNA replication and repair of damaged DNA. The protein is DNA ligase of Hamiltonella defensa subsp. Acyrthosiphon pisum (strain 5AT).